Here is a 337-residue protein sequence, read N- to C-terminus: DNA-directed RNA polymerase subunit alpha (337 aa).

The alpha N-terminal domain (alpha-NTD) stretch occupies residues 1 to 233; that stretch reads MVREKVTVST…DLFIPFLHAQ (233 aa). Residues 267–337 are alpha C-terminal domain (alpha-CTD); the sequence is IALKYIFIDQ…FTVDLPKNKF (71 aa).

Belongs to the RNA polymerase alpha chain family. As to quaternary structure, in plastids the minimal PEP RNA polymerase catalytic core is composed of four subunits: alpha, beta, beta', and beta''. When a (nuclear-encoded) sigma factor is associated with the core the holoenzyme is formed, which can initiate transcription.

It is found in the plastid. It localises to the chloroplast. The catalysed reaction is RNA(n) + a ribonucleoside 5'-triphosphate = RNA(n+1) + diphosphate. Its function is as follows. DNA-dependent RNA polymerase catalyzes the transcription of DNA into RNA using the four ribonucleoside triphosphates as substrates. This is DNA-directed RNA polymerase subunit alpha from Platanus occidentalis (Sycamore).